A 354-amino-acid polypeptide reads, in one-letter code: NADPH dehydrogenase (354 aa).

Positions 23, 24, 26, 58, and 100 each coordinate FMN. Tyr182 serves as the catalytic Proton donor. Arg230, Leu301, Gly323, and Arg324 together coordinate FMN.

The protein belongs to the NADH:flavin oxidoreductase/NADH oxidase family. NamA subfamily. In terms of assembly, homodimer. Behaves as an active monomer in solution while in the crystal packing assembles following the classical dimeric architecture of other thermophilic-like ene-reductases. It depends on FMN as a cofactor.

The enzyme catalyses A + NADPH + H(+) = AH2 + NADP(+). In terms of biological role, ene-reductase that catalyzes the stereoselective reduction of activated C-C double bonds. Shows very good activity with 4-ketoisophorone, 2-cyclohexen-1-one and 1-octen-3-one, and low activity with maleimide, 2-methyl-pentenal, 2-methyl-cyclohexen-1-one, 2-cyclopenten-1-one and trans-2-hexen-1-al. Shows the highest catalytic efficiency with ketoisophorone. Exhibits a restricted substrate spectrum with generally lower activities compared to other ene-reductases. This Chloroflexus aggregans (strain MD-66 / DSM 9485) protein is NADPH dehydrogenase.